The chain runs to 900 residues: Aldos-2-ulose dehydratase (900 aa).

A dehydratase domain region spans residues 1-433; that stretch reads MYSKVFLKPH…NPSINVFLST (433 aa). Position 35 (Y35) interacts with ascopyrone M. Positions 101, 103, 105, 107, and 109 each coordinate Mg(2+). 6 residues coordinate ascopyrone M: Y116, M120, H155, H215, H295, and H337. H155 acts as the Proton acceptor in catalysis. H215, H295, H337, D343, D345, D347, E349, and E351 together coordinate Zn(2+). 3 residues coordinate ascopyrone M: Y414, Y419, and A627. The isomerase domain stretch occupies residues 434-739; sequence GILAERLDEE…EFPGFETFST (306 aa). Residues A627 and H630 each contribute to the 1,5-anhydro-D-fructose site. Positions 630, 632, and 639 each coordinate Zn(2+). 2 residues coordinate ascopyrone M: E639 and H641. 1,5-anhydro-D-fructose is bound at residue H641. Residue H709 participates in Zn(2+) binding. W726 is a binding site for ascopyrone M. W726 provides a ligand contact to 1,5-anhydro-D-fructose.

As to quaternary structure, homodimer. Zn(2+) serves as cofactor.

The catalysed reaction is 1,5-anhydro-D-fructose = microthecin + H2O. It catalyses the reaction 1,5-anhydro-D-fructose = ascopyrone M + H2O. It carries out the reaction ascopyrone M = microthecin. The enzyme catalyses 2-dehydro-D-glucose = cortalcerone + H2O. The protein operates within carbohydrate metabolism; 1,5-anhydro-D-fructose degradation. A bifunctional enzyme which catalyzes the dehydration of anhydrofructose into ascopyrone M, and the isomerization of ascopyrone M into microthecin. To a lesser extent, can also act on 2-dehydro-D-glucopyranose (D-glucosone), leading to the antibiotic cortalcerone. The chain is Aldos-2-ulose dehydratase from Phanerodontia chrysosporium (White-rot fungus).